A 495-amino-acid polypeptide reads, in one-letter code: Protein-serine O-palmitoleoyltransferase porcupine (495 aa).

8 helical membrane-spanning segments follow: residues 46-66 (TQYI…VLIV), 92-112 (VIDH…AVQW), 184-204 (TVLS…GPWI), 232-252 (MLIH…FLLT), 358-378 (PFGT…LHGL), 403-422 (LATI…SCTV), 434-454 (VINM…GCIF), and 475-495 (TELN…YFVI). Residue His-376 is part of the active site.

Belongs to the membrane-bound acyltransferase family. Porcupine subfamily.

It is found in the endoplasmic reticulum membrane. The catalysed reaction is [Wnt protein]-L-serine + (9Z)-hexadecenoyl-CoA = [Wnt protein]-O-(9Z)-hexadecenoyl-L-serine + CoA. In terms of biological role, protein-serine O-palmitoleoyltransferase that acts as a key regulator of the Wnt signaling pathway by mediating the attachment of palmitoleate, a 16-carbon monounsaturated fatty acid (C16:1(9Z)), to Wnt proteins. Serine palmitoleoylation of WNT proteins is required for efficient binding to frizzled receptors. This chain is Protein-serine O-palmitoleoyltransferase porcupine, found in Anopheles gambiae (African malaria mosquito).